A 369-amino-acid polypeptide reads, in one-letter code: p21-activated protein kinase-interacting protein 1-like (369 aa).

5 WD repeats span residues 33 to 70 (AHTA…EHGA), 73 to 111 (QHNG…CLKS), 114 to 153 (AHKG…SAFI), 195 to 233 (TIEK…CLCE), and 236 to 278 (AREN…NNVP). The disordered stretch occupies residues 311-369 (ATSTEANESEKPSAVKKKKVCGMNKSGKLTKQRRRIVPAKRKLEAPLQKKKKKKQNSSE). Basic residues-rich tracts occupy residues 338 to 350 (KLTK…VPAK) and 358 to 369 (QKKKKKKQNSSE).

The protein resides in the nucleus. It localises to the nucleolus. Its function is as follows. Negatively regulates the PAK1 kinase. PAK1 is a member of the PAK kinase family, which has been shown to play a positive role in the regulation of signaling pathways involving MAPK8 and RELA. PAK1 exists as an inactive homodimer, which is activated by binding of small GTPases such as CDC42 to an N-terminal regulatory domain. PAK1IP1 also binds to the N-terminus of PAK1, and inhibits the specific activation of PAK1 by CDC42. May be involved in ribosomal large subunit assembly. This chain is p21-activated protein kinase-interacting protein 1-like (PAK1IP1), found in Gallus gallus (Chicken).